Here is a 460-residue protein sequence, read N- to C-terminus: Bifunctional protein GlmU (460 aa).

Positions 1–229 are pyrophosphorylase; that stretch reads MTNYAIILAA…FNESLGVNDR (229 aa). Residues 8-11, lysine 22, glutamine 72, and 77-78 each bind UDP-N-acetyl-alpha-D-glucosamine; these read LAAG and GT. Aspartate 102 contributes to the Mg(2+) binding site. Glycine 139, glutamate 154, asparagine 169, and asparagine 227 together coordinate UDP-N-acetyl-alpha-D-glucosamine. Position 227 (asparagine 227) interacts with Mg(2+). The tract at residues 230–250 is linker; it reads VALATAETVMRQRITQKHMVN. An N-acetyltransferase region spans residues 251–460; that stretch reads GVTFQNPETV…RLAHHPSRSK (210 aa). UDP-N-acetyl-alpha-D-glucosamine-binding residues include arginine 332 and lysine 350. Catalysis depends on histidine 362, which acts as the Proton acceptor. Positions 365 and 376 each coordinate UDP-N-acetyl-alpha-D-glucosamine. Acetyl-CoA-binding positions include alanine 379, 385-386, serine 404, alanine 422, and arginine 439; that span reads NY.

In the N-terminal section; belongs to the N-acetylglucosamine-1-phosphate uridyltransferase family. This sequence in the C-terminal section; belongs to the transferase hexapeptide repeat family. As to quaternary structure, homotrimer. Requires Mg(2+) as cofactor.

The protein localises to the cytoplasm. It catalyses the reaction alpha-D-glucosamine 1-phosphate + acetyl-CoA = N-acetyl-alpha-D-glucosamine 1-phosphate + CoA + H(+). The enzyme catalyses N-acetyl-alpha-D-glucosamine 1-phosphate + UTP + H(+) = UDP-N-acetyl-alpha-D-glucosamine + diphosphate. It participates in nucleotide-sugar biosynthesis; UDP-N-acetyl-alpha-D-glucosamine biosynthesis; N-acetyl-alpha-D-glucosamine 1-phosphate from alpha-D-glucosamine 6-phosphate (route II): step 2/2. The protein operates within nucleotide-sugar biosynthesis; UDP-N-acetyl-alpha-D-glucosamine biosynthesis; UDP-N-acetyl-alpha-D-glucosamine from N-acetyl-alpha-D-glucosamine 1-phosphate: step 1/1. It functions in the pathway bacterial outer membrane biogenesis; LPS lipid A biosynthesis. In terms of biological role, catalyzes the last two sequential reactions in the de novo biosynthetic pathway for UDP-N-acetylglucosamine (UDP-GlcNAc). The C-terminal domain catalyzes the transfer of acetyl group from acetyl coenzyme A to glucosamine-1-phosphate (GlcN-1-P) to produce N-acetylglucosamine-1-phosphate (GlcNAc-1-P), which is converted into UDP-GlcNAc by the transfer of uridine 5-monophosphate (from uridine 5-triphosphate), a reaction catalyzed by the N-terminal domain. This chain is Bifunctional protein GlmU, found in Streptococcus pyogenes serotype M18 (strain MGAS8232).